The following is a 217-amino-acid chain: Large ribosomal subunit protein uL3 (217 aa).

The segment at 129-161 is disordered; sequence SRGPMSHGSKNHRAPGSTGAGTTPGRIYPGKRM. Residues 142–153 are compositionally biased toward low complexity; that stretch reads APGSTGAGTTPG.

The protein belongs to the universal ribosomal protein uL3 family. Part of the 50S ribosomal subunit. Forms a cluster with proteins L14 and L19.

In terms of biological role, one of the primary rRNA binding proteins, it binds directly near the 3'-end of the 23S rRNA, where it nucleates assembly of the 50S subunit. This chain is Large ribosomal subunit protein uL3, found in Prochlorococcus marinus (strain MIT 9515).